A 385-amino-acid polypeptide reads, in one-letter code: Lipid-A-disaccharide synthase (385 aa).

It belongs to the LpxB family.

It catalyses the reaction a lipid X + a UDP-2-N,3-O-bis[(3R)-3-hydroxyacyl]-alpha-D-glucosamine = a lipid A disaccharide + UDP + H(+). The protein operates within bacterial outer membrane biogenesis; LPS lipid A biosynthesis. Functionally, condensation of UDP-2,3-diacylglucosamine and 2,3-diacylglucosamine-1-phosphate to form lipid A disaccharide, a precursor of lipid A, a phosphorylated glycolipid that anchors the lipopolysaccharide to the outer membrane of the cell. This chain is Lipid-A-disaccharide synthase, found in Xylella fastidiosa (strain M12).